Consider the following 425-residue polypeptide: Serine--tRNA ligase (425 aa).

230–232 (TAE) is an L-serine binding site. An ATP-binding site is contributed by 261 to 263 (RSE). Residue Glu-284 participates in L-serine binding. 348-351 (EISS) contributes to the ATP binding site. Ser-384 contacts L-serine.

It belongs to the class-II aminoacyl-tRNA synthetase family. Type-1 seryl-tRNA synthetase subfamily. Homodimer. The tRNA molecule binds across the dimer.

It is found in the cytoplasm. It carries out the reaction tRNA(Ser) + L-serine + ATP = L-seryl-tRNA(Ser) + AMP + diphosphate + H(+). The catalysed reaction is tRNA(Sec) + L-serine + ATP = L-seryl-tRNA(Sec) + AMP + diphosphate + H(+). It functions in the pathway aminoacyl-tRNA biosynthesis; selenocysteinyl-tRNA(Sec) biosynthesis; L-seryl-tRNA(Sec) from L-serine and tRNA(Sec): step 1/1. Its function is as follows. Catalyzes the attachment of serine to tRNA(Ser). Is also able to aminoacylate tRNA(Sec) with serine, to form the misacylated tRNA L-seryl-tRNA(Sec), which will be further converted into selenocysteinyl-tRNA(Sec). The chain is Serine--tRNA ligase from Streptococcus pyogenes serotype M1.